Consider the following 724-residue polypeptide: N-alpha-acetyltransferase 35, NatC auxiliary subunit (724 aa).

Belongs to the MAK10 family. In terms of assembly, component of the N-terminal acetyltransferase C (NatC) complex.

It localises to the cytoplasm. Its function is as follows. Auxillary component of the N-terminal acetyltransferase C (NatC) complex which catalyzes acetylation of N-terminal methionine residues. N-terminal acetylation protects proteins from ubiquitination and degradation by the N-end rule pathway. Regulates cell proliferation during embryonic development. This Danio rerio (Zebrafish) protein is N-alpha-acetyltransferase 35, NatC auxiliary subunit (naa35).